A 374-amino-acid chain; its full sequence is Tomoregulin-2 (374 aa).

The N-terminal stretch at M1–A39 is a signal peptide. At A40–V320 the chain is on the extracellular side. N-linked (GlcNAc...) asparagine glycosylation is present at N55. 2 Kazal-like domains span residues V90–T137 and V181–D229. Cystine bridges form between C91–C121, C95–C114, C103–C135, C182–C213, C186–C206, C195–C227, C265–C278, C273–C289, and C291–C300. Residues H261 to E301 form the EGF-like domain. A required for shedding region spans residues K303 to V320. The helical transmembrane segment at L321–I341 threads the bilayer. Residues T342–I374 lie on the Cytoplasmic side of the membrane. Residues R353–I374 are disordered. A compositionally biased stretch (polar residues) spans Q356–I374.

It belongs to the tomoregulin family. Post-translationally, O-glycosylated; contains chondroitin sulfate glycosaminoglycans. A soluble form (TMEFF2-ECD) is produced by proteolytic shedding. This shedding can be induced by phorbol ester or pro-inflammatory cytokines such as TNFalpha, and is mediated by a metalloproteinase ADAM.

It localises to the membrane. Functionally, may be a survival factor for hippocampal and mesencephalic neurons. The shedded form may up-regulate cell proliferation. The polypeptide is Tomoregulin-2 (TMEFF2) (Bos taurus (Bovine)).